Here is a 218-residue protein sequence, read N- to C-terminus: uncharacterized protein (218 aa).

This is an uncharacterized protein from Caenorhabditis elegans.